Reading from the N-terminus, the 356-residue chain is Peptide chain release factor 1 (356 aa).

The residue at position 233 (Q233) is an N5-methylglutamine.

It belongs to the prokaryotic/mitochondrial release factor family. Methylated by PrmC. Methylation increases the termination efficiency of RF1.

It is found in the cytoplasm. Its function is as follows. Peptide chain release factor 1 directs the termination of translation in response to the peptide chain termination codons UAG and UAA. The protein is Peptide chain release factor 1 of Shouchella clausii (strain KSM-K16) (Alkalihalobacillus clausii).